Consider the following 266-residue polypeptide: Glucose 1-dehydrogenase (266 aa).

15 to 39 is an NADP(+) binding site; it reads LVTGASQGIGEATALRFAEEGAQVA. Ser149 lines the substrate pocket. Tyr162 serves as the catalytic Proton acceptor.

Belongs to the short-chain dehydrogenases/reductases (SDR) family. Homotetramer or homooctamer.

It catalyses the reaction D-glucose + NADP(+) = D-glucono-1,5-lactone + NADPH + H(+). Functionally, oxidizes both D-glucose and D-mannose, but is 15 times more catalytically efficient with mannose. Strictly dependent on NADP. The sequence is that of Glucose 1-dehydrogenase from Gluconobacter oxydans (strain 621H) (Gluconobacter suboxydans).